The chain runs to 445 residues: Cyclic GMP-AMP synthase-like receptor 1 (445 aa).

Residues Glu-70, Asp-72, and Asp-186 each coordinate Mg(2+). Glu-70–Asp-72 lines the ATP pocket. GTP is bound by residues Asp-186 and Arg-232–Glu-239. ATP is bound by residues Tyr-236–Glu-239, Lys-257, and Ser-270–Lys-274. The interval Leu-357–Ser-445 is disordered. A compositionally biased stretch (basic and acidic residues) spans Gln-377–Ala-398. Low complexity predominate over residues Thr-435–Ser-445.

This sequence belongs to the mab-21 family. Mg(2+) is required as a cofactor. Mn(2+) serves as cofactor.

The enzyme catalyses GTP + ATP = 3',2'-cGAMP + 2 diphosphate. It catalyses the reaction GTP + ATP = pppA(2'-5')pG + diphosphate. The catalysed reaction is pppA(2'-5')pG = 3',2'-cGAMP + diphosphate. With respect to regulation, the enzyme activity is specifically activated by double-stranded RNA (dsRNA). In terms of biological role, nucleotidyltransferase that catalyzes the formation of cyclic GMP-AMP (3',2'-cGAMP) from ATP and GTP and plays a key role in innate immunity. Synthesizes 3',2'-cGAMP in a two-step reaction through production of the linear intermediate pppA(2'-5')pG. Acts as a key sensor of double-stranded RNA (dsRNA), the presence of dsRNA in the cytoplasm being a danger signal that triggers the immune responses. Directly binds dsRNA, activating the nucleotidyltransferase activity, leading to synthesis of 3',2'-cGAMP, a second messenger that binds to and activates Sting, thereby triggering the antiviral immune response via activation of the NF-kappa-B transcription factor Rel (Relish). The protein is Cyclic GMP-AMP synthase-like receptor 1 of Drosophila erecta (Fruit fly).